We begin with the raw amino-acid sequence, 333 residues long: MQISVNEFLTPRHIDVQVVSPTRAKITLEPLERGFGHTLGNALRRILLSSMPGCAVVEAEIDGVLHEYSAIEGVQEDVIEILLNLKGLAIKLHGRDEVTLTLSKKGSGVVTAADIQLDHDVEIVNPDHVIANLASNGALNMKLVVARGRGYEPADSRQSDEDESRSIGRLQLDSSFSPVRRIAYVVENARVEQRTNLDKLVIDLETNGTLDPEEAIRRAATILQQQLAAFVDLKGDSEPVVVEQEDEIDPILLRPVDDLELTVRSANCLKAENIYYIGDLIQRTEVELLKTPNLGKKSLTEIKDVLASRGLSLGMRLDNWPPASLKKDDKATA.

The alpha N-terminal domain (alpha-NTD) stretch occupies residues 1-234 (MQISVNEFLT…QQLAAFVDLK (234 aa)). The alpha C-terminal domain (alpha-CTD) stretch occupies residues 248-333 (IDPILLRPVD…SLKKDDKATA (86 aa)).

The protein belongs to the RNA polymerase alpha chain family. In terms of assembly, homodimer. The RNAP catalytic core consists of 2 alpha, 1 beta, 1 beta' and 1 omega subunit. When a sigma factor is associated with the core the holoenzyme is formed, which can initiate transcription.

The enzyme catalyses RNA(n) + a ribonucleoside 5'-triphosphate = RNA(n+1) + diphosphate. Its function is as follows. DNA-dependent RNA polymerase catalyzes the transcription of DNA into RNA using the four ribonucleoside triphosphates as substrates. In Pseudomonas fluorescens (strain ATCC BAA-477 / NRRL B-23932 / Pf-5), this protein is DNA-directed RNA polymerase subunit alpha.